The sequence spans 528 residues: Chaperonin GroEL, chloroplastic (528 aa).

ATP is bound by residues 29–32 (TLGP), 86–90 (DGTTT), G415, 481–483 (NAA), and D497.

Belongs to the chaperonin (HSP60) family. As to quaternary structure, forms a cylinder of 14 subunits composed of two heptameric rings stacked back-to-back. Interacts with the co-chaperonin GroES.

It localises to the plastid. The protein resides in the chloroplast. The catalysed reaction is ATP + H2O + a folded polypeptide = ADP + phosphate + an unfolded polypeptide.. Its function is as follows. Together with its co-chaperonin GroES, plays an essential role in assisting protein folding. The GroEL-GroES system forms a nano-cage that allows encapsulation of the non-native substrate proteins and provides a physical environment optimized to promote and accelerate protein folding. The chain is Chaperonin GroEL, chloroplastic from Trieres chinensis (Marine centric diatom).